The following is a 162-amino-acid chain: Large ribosomal subunit protein uL10 (162 aa).

The protein belongs to the universal ribosomal protein uL10 family. Part of the ribosomal stalk of the 50S ribosomal subunit. The N-terminus interacts with L11 and the large rRNA to form the base of the stalk. The C-terminus forms an elongated spine to which L12 dimers bind in a sequential fashion forming a multimeric L10(L12)X complex.

Its function is as follows. Forms part of the ribosomal stalk, playing a central role in the interaction of the ribosome with GTP-bound translation factors. The chain is Large ribosomal subunit protein uL10 from Borrelia recurrentis (strain A1).